We begin with the raw amino-acid sequence, 303 residues long: UDP-3-O-acyl-N-acetylglucosamine deacetylase (303 aa).

Residues H78, H237, and D241 each coordinate Zn(2+). The Proton donor role is filled by H264.

This sequence belongs to the LpxC family. The cofactor is Zn(2+).

The catalysed reaction is a UDP-3-O-[(3R)-3-hydroxyacyl]-N-acetyl-alpha-D-glucosamine + H2O = a UDP-3-O-[(3R)-3-hydroxyacyl]-alpha-D-glucosamine + acetate. It participates in glycolipid biosynthesis; lipid IV(A) biosynthesis; lipid IV(A) from (3R)-3-hydroxytetradecanoyl-[acyl-carrier-protein] and UDP-N-acetyl-alpha-D-glucosamine: step 2/6. Catalyzes the hydrolysis of UDP-3-O-myristoyl-N-acetylglucosamine to form UDP-3-O-myristoylglucosamine and acetate, the committed step in lipid A biosynthesis. This is UDP-3-O-acyl-N-acetylglucosamine deacetylase from Pseudomonas fluorescens (strain SBW25).